A 159-amino-acid chain; its full sequence is Transcription antitermination protein NusB (159 aa).

This sequence belongs to the NusB family.

Its function is as follows. Involved in transcription antitermination. Required for transcription of ribosomal RNA (rRNA) genes. Binds specifically to the boxA antiterminator sequence of the ribosomal RNA (rrn) operons. In Xanthomonas axonopodis pv. citri (strain 306), this protein is Transcription antitermination protein NusB.